A 140-amino-acid polypeptide reads, in one-letter code: Myelodysplastic syndrome 2 translocation-associated protein (140 aa).

In terms of tissue distribution, highly expressed in peripheral blood leukocytes, spleen, thymus, kidney, pancreas and lung.

This Homo sapiens (Human) protein is Myelodysplastic syndrome 2 translocation-associated protein (MDS2).